The primary structure comprises 474 residues: ATP synthase subunit beta 2 (474 aa).

Position 153-160 (153-160 (GGAGVGKT)) interacts with ATP.

Belongs to the ATPase alpha/beta chains family. As to quaternary structure, F-type ATPases have 2 components, CF(1) - the catalytic core - and CF(0) - the membrane proton channel. CF(1) has five subunits: alpha(3), beta(3), gamma(1), delta(1), epsilon(1). CF(0) has three main subunits: a(1), b(2) and c(9-12). The alpha and beta chains form an alternating ring which encloses part of the gamma chain. CF(1) is attached to CF(0) by a central stalk formed by the gamma and epsilon chains, while a peripheral stalk is formed by the delta and b chains.

The protein resides in the cell inner membrane. It carries out the reaction ATP + H2O + 4 H(+)(in) = ADP + phosphate + 5 H(+)(out). Produces ATP from ADP in the presence of a proton gradient across the membrane. The catalytic sites are hosted primarily by the beta subunits. The protein is ATP synthase subunit beta 2 of Syntrophotalea carbinolica (strain DSM 2380 / NBRC 103641 / GraBd1) (Pelobacter carbinolicus).